The following is a 116-amino-acid chain: uncharacterized protein (116 aa).

2 consecutive transmembrane segments (helical) span residues 40–60 (AIVK…IGIL) and 72–92 (FLGS…VVPI).

The protein resides in the membrane. This is an uncharacterized protein from Saccharomyces cerevisiae (strain ATCC 204508 / S288c) (Baker's yeast).